Consider the following 161-residue polypeptide: Multiprotein-bridging factor 1 (161 aa).

The tract at residues 1 to 66 is disordered; it reads MADDWDTVTK…RSEAGSGQFL (66 aa). Gly residues predominate over residues 14 to 23; the sequence is RVGGGGGGGP. 2 stretches are compositionally biased toward polar residues: residues 27–36 and 52–65; these read TIKNKSQLNA and TANSSRSEAGSGQF. Residues 90-144 form the HTH cro/C1-type domain; sequence MQNREQKKLGNRLEFGKKVGINEKDLARIEKGEVPITQDQVNRIERGLEMFIRGV. The segment at residues 101–120 is a DNA-binding region (H-T-H motif); sequence RLEFGKKVGINEKDLARIEK.

This sequence belongs to the MBF1 family.

Functionally, transcriptional coactivator that stimulates GCN4-dependent transcriptional activity by bridging the DNA-binding region of GCN4 and TBP (SPT15), thereby recruiting TBP to GCN4-bound promoters. Involved in induction of the ribosome quality control (RQC) pathway; a pathway that degrades nascent peptide chains during problematic translation. Required to prevent stalled ribosomes from frameshifting. The protein is Multiprotein-bridging factor 1 (MBF1) of Pyricularia oryzae (strain 70-15 / ATCC MYA-4617 / FGSC 8958) (Rice blast fungus).